Reading from the N-terminus, the 129-residue chain is Glycine cleavage system H protein (129 aa).

Residues 24–106 (SYTVGISEHA…FGDGWFFRVM (83 aa)) form the Lipoyl-binding domain. Lys-65 is subject to N6-lipoyllysine.

It belongs to the GcvH family. In terms of assembly, the glycine cleavage system is composed of four proteins: P, T, L and H. (R)-lipoate is required as a cofactor.

The glycine cleavage system catalyzes the degradation of glycine. The H protein shuttles the methylamine group of glycine from the P protein to the T protein. The sequence is that of Glycine cleavage system H protein from Shewanella sediminis (strain HAW-EB3).